Consider the following 246-residue polypeptide: O-antigen export system ATP-binding protein RfbB (246 aa).

In terms of domain architecture, ABC transporter spans 22 to 246; the sequence is SGIKDLIFHP…IIELYKQAMA (225 aa). 63–70 lines the ATP pocket; sequence GRNGAGKS.

Belongs to the ABC transporter superfamily.

It localises to the cell inner membrane. In terms of biological role, may form an ATP-driven O-antigen export apparatus, in association with RfbA. The polypeptide is O-antigen export system ATP-binding protein RfbB (rfbB) (Klebsiella pneumoniae).